The primary structure comprises 280 residues: Vitamin B12-binding protein (280 aa).

An N-terminal signal peptide occupies residues Met-1–Ala-27. Residues Arg-30–Ala-277 enclose the Fe/B12 periplasmic-binding domain. Tyr-57 is a cyanocob(III)alamin binding site. A disulfide bridge connects residues Cys-190 and Cys-266.

This sequence belongs to the BtuF family. In terms of assembly, the complex is composed of two ATP-binding proteins (BtuD), two transmembrane proteins (BtuC) and a solute-binding protein (BtuF).

It is found in the periplasm. In terms of biological role, part of the ABC transporter complex BtuCDF involved in vitamin B12 import. Binds vitamin B12 and delivers it to the periplasmic surface of BtuC. This chain is Vitamin B12-binding protein, found in Yersinia pseudotuberculosis serotype O:3 (strain YPIII).